The following is a 192-amino-acid chain: Small ribosomal subunit protein uS5 (192 aa).

The S5 DRBM domain maps to 20–83; that stretch reads FVDRLVHINR…EAAKRGLIRV (64 aa). Residues 165–192 are disordered; that stretch reads ARRGLKVSALQARRRDAEPGSADSADAA.

It belongs to the universal ribosomal protein uS5 family. In terms of assembly, part of the 30S ribosomal subunit. Contacts proteins S4 and S8.

With S4 and S12 plays an important role in translational accuracy. Its function is as follows. Located at the back of the 30S subunit body where it stabilizes the conformation of the head with respect to the body. In Methylobacterium sp. (strain 4-46), this protein is Small ribosomal subunit protein uS5.